Consider the following 229-residue polypeptide: Wtf element wtf14 (229 aa).

Over residues 1 to 26 (MENNHHLAKDSLDELNPKRGKGEHET) the composition is skewed to basic and acidic residues. The interval 1-27 (MENNHHLAKDSLDELNPKRGKGEHETQ) is disordered. 4 consecutive transmembrane segments (helical) span residues 71 to 91 (IPAV…YLVF), 100 to 120 (VLFG…LLAT), 151 to 171 (LYAI…LMFF), and 188 to 208 (VIGV…PGLF).

This sequence belongs to the WTF family.

The protein localises to the endoplasmic reticulum membrane. May act in meiotic drive. This chain is Wtf element wtf14, found in Schizosaccharomyces pombe (strain 972 / ATCC 24843) (Fission yeast).